We begin with the raw amino-acid sequence, 427 residues long: 3-phosphoshikimate 1-carboxyvinyltransferase (427 aa).

Residues Lys-21, Ser-22, and Arg-26 each coordinate 3-phosphoshikimate. Lys-21 provides a ligand contact to phosphoenolpyruvate. Phosphoenolpyruvate contacts are provided by Gly-93 and Arg-121. 3-phosphoshikimate contacts are provided by Ser-166, Gln-168, Asp-314, and Lys-341. Gln-168 contributes to the phosphoenolpyruvate binding site. Asp-314 serves as the catalytic Proton acceptor. The phosphoenolpyruvate site is built by Arg-345 and Arg-387.

This sequence belongs to the EPSP synthase family. Monomer.

It is found in the cytoplasm. The catalysed reaction is 3-phosphoshikimate + phosphoenolpyruvate = 5-O-(1-carboxyvinyl)-3-phosphoshikimate + phosphate. Its pathway is metabolic intermediate biosynthesis; chorismate biosynthesis; chorismate from D-erythrose 4-phosphate and phosphoenolpyruvate: step 6/7. Catalyzes the transfer of the enolpyruvyl moiety of phosphoenolpyruvate (PEP) to the 5-hydroxyl of shikimate-3-phosphate (S3P) to produce enolpyruvyl shikimate-3-phosphate and inorganic phosphate. This is 3-phosphoshikimate 1-carboxyvinyltransferase from Alkaliphilus oremlandii (strain OhILAs) (Clostridium oremlandii (strain OhILAs)).